A 347-amino-acid polypeptide reads, in one-letter code: Isopentenyl-diphosphate delta-isomerase (347 aa).

9-10 is a binding site for substrate; sequence RK. FMN contacts are provided by residues S67, 68 to 70, S98, and N127; that span reads SMT. Residue 98–100 participates in substrate binding; that stretch reads SQR. Q162 is a binding site for substrate. Mg(2+) is bound at residue E163. Residues K194, T224, 274–276, and 295–296 contribute to the FMN site; these read GIK and AA.

Belongs to the IPP isomerase type 2 family. Homooctamer. Dimer of tetramers. The cofactor is FMN. NADPH is required as a cofactor. Mg(2+) serves as cofactor.

It localises to the cytoplasm. The enzyme catalyses isopentenyl diphosphate = dimethylallyl diphosphate. Involved in the biosynthesis of isoprenoids. Catalyzes the 1,3-allylic rearrangement of the homoallylic substrate isopentenyl (IPP) to its allylic isomer, dimethylallyl diphosphate (DMAPP). In Pseudescherichia vulneris (Escherichia vulneris), this protein is Isopentenyl-diphosphate delta-isomerase.